Consider the following 110-residue polypeptide: Phosphoribosyl-ATP pyrophosphatase (110 aa).

This sequence belongs to the PRA-PH family.

The protein localises to the cytoplasm. The catalysed reaction is 1-(5-phospho-beta-D-ribosyl)-ATP + H2O = 1-(5-phospho-beta-D-ribosyl)-5'-AMP + diphosphate + H(+). It participates in amino-acid biosynthesis; L-histidine biosynthesis; L-histidine from 5-phospho-alpha-D-ribose 1-diphosphate: step 2/9. The chain is Phosphoribosyl-ATP pyrophosphatase from Clostridium botulinum (strain ATCC 19397 / Type A).